Reading from the N-terminus, the 149-residue chain is Lipoprotein signal peptidase (149 aa).

Transmembrane regions (helical) follow at residues 53–73 (MPGK…ALVI) and 89–109 (GLIA…GFVI). Catalysis depends on residues D110 and D124. A helical transmembrane segment spans residues 119–139 (VFNLADSAIVCGGILLLILVL).

This sequence belongs to the peptidase A8 family.

The protein resides in the cell membrane. It catalyses the reaction Release of signal peptides from bacterial membrane prolipoproteins. Hydrolyzes -Xaa-Yaa-Zaa-|-(S,diacylglyceryl)Cys-, in which Xaa is hydrophobic (preferably Leu), and Yaa (Ala or Ser) and Zaa (Gly or Ala) have small, neutral side chains.. The protein operates within protein modification; lipoprotein biosynthesis (signal peptide cleavage). This protein specifically catalyzes the removal of signal peptides from prolipoproteins. This chain is Lipoprotein signal peptidase, found in Syntrophomonas wolfei subsp. wolfei (strain DSM 2245B / Goettingen).